A 151-amino-acid polypeptide reads, in one-letter code: Decarboxylase nsrE (151 aa).

An EthD domain is found at 31-126; sequence AGMTEEDYHN…VGDHENFADT (96 aa).

This sequence belongs to the tpcK family.

The enzyme catalyses atrochrysone carboxylate + H(+) = atrochrysone + CO2. Its pathway is secondary metabolite biosynthesis. Decarboxylase; part of the gene cluster that mediates the biosynthesis of the tetrahydroxanthone dimer neosartorin, which exhibits antibacterial activity. The two different monomeric units appear to be synthesized by the same set of enzymes, among which the Baeyer-Villiger monooxygenase nsrF is the key enzyme for the divergence of the biosynthetic routes. The pathway begins with the synthesis of atrochrysone thioester by the polyketide synthase nsrB. The atrochrysone carboxyl ACP thioesterase nsrC then breaks the thioester bond and releases the atrochrysone carboxylic acid from AacuL. Atrochrysone carboxylic acid is decarboxylated by the decarboxylase nsrE, and oxidized by the anthrone oxygenase nsrD to yield emodin. Emodin is then reduced to emodin hydroquinone by the oxidoreductase nsrR. A-ring reduction by the short chain dehydrogenase nsrJ, dehydration by the scytalone dehydratase-like protein nsrI and probable spontaneous re-oxidation, results in overall deoxygenation to chrysophanol. The Baeyer-Villiger monooxygenase nsrF accepts chrysophanol as a substrate to insert one oxygen atom at two different positions to yield the precursors of both monomric units. NsrF is promiscuous/flexible in interacting with the 2 (non methylated and methylated) aromatic rings of chrysophanol, thus diverging the biosynthetic pathway at this point. After the hydrolysis of the lactones, methylesterification by the methyltransferase nsrG yields respectively moniliphenone and 2,2',6'-trihydroxy-4-methyl-6-methoxya-cyldiphenylmethanone. The next steps are the hydroxylation by the FAD-dependent monooxygenase nsrK, followed by isomerization by the monooxygenase nsrQ. The short chain dehydrogenase/reductase nsrO then catalyzes the C-5 ketoreduction to give the xanthone skeleton of blennolide C and 5-acetylblennolide A. The acetyltransferase nsrL has a strict substrate specificity and uses only blennolide A but not blennolide C to yield 5-acetylblennolide A as the single-acetylated product. In the final step of the biosynthesis, the heterodimerization of the 2 xanthones, blennolide C and 5-acetylblennolide A, is catalyzed by the cytochrome P450 monooxygenase nsrP. NsrP can utilize at least three different xanthones as its substrates to perform the dimerization reaction. This is Decarboxylase nsrE from Aspergillus novofumigatus (strain IBT 16806).